Reading from the N-terminus, the 197-residue chain is FMN-dependent NADH:quinone oxidoreductase 1 (197 aa).

Residues serine 10, 16–18 (SQS), 93–96 (MYNF), and 137–140 (TRGG) each bind FMN.

It belongs to the azoreductase type 1 family. In terms of assembly, homodimer. It depends on FMN as a cofactor.

The enzyme catalyses 2 a quinone + NADH + H(+) = 2 a 1,4-benzosemiquinone + NAD(+). It catalyses the reaction N,N-dimethyl-1,4-phenylenediamine + anthranilate + 2 NAD(+) = 2-(4-dimethylaminophenyl)diazenylbenzoate + 2 NADH + 2 H(+). Quinone reductase that provides resistance to thiol-specific stress caused by electrophilic quinones. In terms of biological role, also exhibits azoreductase activity. Catalyzes the reductive cleavage of the azo bond in aromatic azo compounds to the corresponding amines. The sequence is that of FMN-dependent NADH:quinone oxidoreductase 1 from Photobacterium profundum (strain SS9).